A 347-amino-acid chain; its full sequence is MNKELLDDILSLEDKAVSEIENASSLQDLEKVRLSYLGKKGVIKAYFDNLKEIEDAGKKRNLGEVINVLRNKLDQLIMNKENILKAEEVNFKLQNEAVDITLPARPEKIGKVHPLSKVINEVKLIFAHMGFKAVDGPDIEDEFHVFDALNTPSHHPAREEQDTFYLKNKRNDKRMVLRTHTSSVQIRTMEKTKKFPIKIVAPGRVYRNDFDATHTPMFHQIEGLYVDENVNMGQLKFTIHHFLNKFFGDKGLKIRFRNSFFPFTEPSAEVDISYKGSKWIEVLGCGMVHPNVFQNVGIDHTKYNGFAFGIGIERLAMLKYQISDLRSFYDNKISWLDHYGFHFSSLR.

Residue Glu265 participates in Mg(2+) binding.

Belongs to the class-II aminoacyl-tRNA synthetase family. Phe-tRNA synthetase alpha subunit type 1 subfamily. As to quaternary structure, tetramer of two alpha and two beta subunits. The cofactor is Mg(2+).

It is found in the cytoplasm. It catalyses the reaction tRNA(Phe) + L-phenylalanine + ATP = L-phenylalanyl-tRNA(Phe) + AMP + diphosphate + H(+). The chain is Phenylalanine--tRNA ligase alpha subunit from Wolbachia sp. subsp. Drosophila simulans (strain wRi).